Here is a 360-residue protein sequence, read N- to C-terminus: Chorismate synthase (360 aa).

Positions 36-60 (LSEDDIQPDLDRRKPGTSKYTTPRR) are disordered. Arginine 48 contributes to the NADP(+) binding site. FMN-binding positions include 125–127 (RSS), 246–247 (NA), glycine 286, 301–305 (KPTSS), and arginine 327.

Belongs to the chorismate synthase family. As to quaternary structure, homotetramer. The cofactor is FMNH2.

It carries out the reaction 5-O-(1-carboxyvinyl)-3-phosphoshikimate = chorismate + phosphate. It functions in the pathway metabolic intermediate biosynthesis; chorismate biosynthesis; chorismate from D-erythrose 4-phosphate and phosphoenolpyruvate: step 7/7. Functionally, catalyzes the anti-1,4-elimination of the C-3 phosphate and the C-6 proR hydrogen from 5-enolpyruvylshikimate-3-phosphate (EPSP) to yield chorismate, which is the branch point compound that serves as the starting substrate for the three terminal pathways of aromatic amino acid biosynthesis. This reaction introduces a second double bond into the aromatic ring system. The sequence is that of Chorismate synthase from Histophilus somni (strain 129Pt) (Haemophilus somnus).